A 369-amino-acid polypeptide reads, in one-letter code: Glutamate 5-kinase (369 aa).

Lysine 14 provides a ligand contact to ATP. 3 residues coordinate substrate: serine 56, aspartate 143, and asparagine 155. ATP is bound by residues 175 to 176 (SD) and 215 to 221 (TGGMASK). The PUA domain maps to 277 to 351 (AGKIRLDDGA…GMQTQDLPDG (75 aa)).

This sequence belongs to the glutamate 5-kinase family.

Its subcellular location is the cytoplasm. It carries out the reaction L-glutamate + ATP = L-glutamyl 5-phosphate + ADP. It participates in amino-acid biosynthesis; L-proline biosynthesis; L-glutamate 5-semialdehyde from L-glutamate: step 1/2. Functionally, catalyzes the transfer of a phosphate group to glutamate to form L-glutamate 5-phosphate. This chain is Glutamate 5-kinase, found in Corynebacterium glutamicum (strain ATCC 13032 / DSM 20300 / JCM 1318 / BCRC 11384 / CCUG 27702 / LMG 3730 / NBRC 12168 / NCIMB 10025 / NRRL B-2784 / 534).